The sequence spans 447 residues: GTPase Der (447 aa).

2 EngA-type G domains span residues lysine 4–glutamate 165 and leucine 180–asparagine 357. GTP is bound by residues glycine 10–serine 17, aspartate 57–leucine 61, asparagine 119–glutamate 122, glycine 186–serine 193, aspartate 233–leucine 237, and asparagine 298–aspartate 301. In terms of domain architecture, KH-like spans lysine 358–lysine 443.

This sequence belongs to the TRAFAC class TrmE-Era-EngA-EngB-Septin-like GTPase superfamily. EngA (Der) GTPase family. Associates with the 50S ribosomal subunit.

GTPase that plays an essential role in the late steps of ribosome biogenesis. The chain is GTPase Der from Rickettsia prowazekii (strain Madrid E).